The chain runs to 157 residues: MMDVLMYLFETYIHSDVELNVEQEKLEDELLKAGFHQEAVYKALDWLEDLARLQDTDEHARVATGTSTSMRIYTQQEIDGINTVCRGFLLFLEQIKVLTSETREMVIEQVMALETDELSLDDLKWVVLMVLFNVPGQESAYTQMEELLYTSDVGLTH.

The protein belongs to the Smg family.

The chain is Protein Smg homolog from Aliivibrio fischeri (strain ATCC 700601 / ES114) (Vibrio fischeri).